We begin with the raw amino-acid sequence, 62 residues long: Large ribosomal subunit protein uL29 (62 aa).

Belongs to the universal ribosomal protein uL29 family.

The chain is Large ribosomal subunit protein uL29 from Desulfatibacillum aliphaticivorans.